The following is a 668-amino-acid chain: Exoribonuclease 2 (668 aa).

Positions 193–521 (RIEMTHVPFV…INHRMLKAVI (329 aa)) constitute an RNB domain. One can recognise an S1 motif domain in the interval 568–650 (QTCFTGEIFD…ENRSLVAKPT (83 aa)).

It belongs to the RNR ribonuclease family. RNase II subfamily.

The protein resides in the cytoplasm. It catalyses the reaction Exonucleolytic cleavage in the 3'- to 5'-direction to yield nucleoside 5'-phosphates.. Involved in mRNA degradation. Hydrolyzes single-stranded polyribonucleotides processively in the 3' to 5' direction. This Vibrio parahaemolyticus serotype O3:K6 (strain RIMD 2210633) protein is Exoribonuclease 2.